Here is a 214-residue protein sequence, read N- to C-terminus: Charged multivesicular body protein 2b-B (214 aa).

Residues 25–55 adopt a coiled-coil conformation; it reads QRAITRDRAALEKQEKQLEMEIKKMAKTGNK. The segment at 178–200 is disordered; sequence MAKAPSAAKGLPSTSAAKSKGIS. Positions 202 to 212 match the MIT-interacting motif motif; the sequence is EEIERQLKALG.

Belongs to the SNF7 family. In terms of assembly, probable core component of the endosomal sorting required for transport complex III (ESCRT-III). ESCRT-III components are thought to multimerize to form a flat lattice on the perimeter membrane of the endosome.

Its subcellular location is the cytoplasm. It is found in the cytosol. The protein resides in the late endosome membrane. Functionally, probable core component of the endosomal sorting required for transport complex III (ESCRT-III) which is involved in multivesicular bodies (MVBs) formation and sorting of endosomal cargo proteins into MVBs. MVBs contain intraluminal vesicles (ILVs) that are generated by invagination and scission from the limiting membrane of the endosome and mostly are delivered to lysosomes enabling degradation of membrane proteins, such as stimulated growth factor receptors, lysosomal enzymes and lipids. This chain is Charged multivesicular body protein 2b-B (chmp2b-b), found in Xenopus laevis (African clawed frog).